Consider the following 344-residue polypeptide: Probable nicotinate-nucleotide adenylyltransferase/Ap4A hydrolase (344 aa).

Positions 1–182 (MIFGGAFDPL…YIHQHNIYLK (182 aa)) are naMN adenylyltransferase. Positions 191 to 344 (EPRMQHCLRV…LKYVRSLQKN (154 aa)) are ap4A hydrolase. The 112-residue stretch at 193–304 (RMQHCLRVGQ…IYLADKLEPM (112 aa)) folds into the HD domain. ADP is bound at residue His196. Positions 196, 225, and 226 each coordinate Fe cation. Residues 226–229 (DLAK), His255, 281–282 (HT), Asp299, and Arg305 contribute to the ADP site. Asp299 is a binding site for Fe cation.

It in the N-terminal section; belongs to the NadD family. The protein in the C-terminal section; belongs to the Ap4A hydrolase YqeK family.

It catalyses the reaction nicotinate beta-D-ribonucleotide + ATP + H(+) = deamido-NAD(+) + diphosphate. The catalysed reaction is P(1),P(4)-bis(5'-adenosyl) tetraphosphate + H2O = 2 ADP + 2 H(+). It functions in the pathway cofactor biosynthesis; NAD(+) biosynthesis; deamido-NAD(+) from nicotinate D-ribonucleotide: step 1/1. In terms of biological role, catalyzes the reversible adenylation of nicotinate mononucleotide (NaMN) to nicotinic acid adenine dinucleotide (NaAD). Hydrolyzes diadenosine 5',5'''-P1,P4-tetraphosphate (Ap4A) to yield ADP. In Mycoplasma pneumoniae (strain ATCC 29342 / M129 / Subtype 1) (Mycoplasmoides pneumoniae), this protein is Probable nicotinate-nucleotide adenylyltransferase/Ap4A hydrolase.